We begin with the raw amino-acid sequence, 458 residues long: UPF0210 protein MMP1427 (458 aa).

It belongs to the UPF0210 family.

The chain is UPF0210 protein MMP1427 from Methanococcus maripaludis (strain DSM 14266 / JCM 13030 / NBRC 101832 / S2 / LL).